The following is a 451-amino-acid chain: MQSIEDIWQETLQIVKKNMSKPSYDTWMKSTTAHSLEGNTFIISAPNNFVRDWLEKSYTQFIANILQEITGRLFDVRFIDGEQEENFEYTVIKPNPALDEDGVEIGKHMLNPRYVFDTFVIGSGNRFAHAASLAVAEAPAKAYNPLFIYGGVGLGKTHLMHAVGHYVQQHKDNAKVMYLSSEKFTNEFISSIRDNKTEEFRTKYRNVDVLLIDDIQFLAGKEGTQEEFFHTFNTLYDEQKQIIISSDRPPKEIPTLEDRLRSRFEWGLITDITPPDLETRIAILRKKAKADGLDIPNEVMLYIANQIDSNIRELEGALIRVVAYSSLVNKDITAGLAAEALKDIIPSSKSQVITISGIQEAVGEYFHVRLEDFKAKKRTKSIAFPRQIAMYLSRELTDASLPKIGDEFGGRDHTTVIHAHEKISQLLKTDQVLKNDLAEIEKNLRKAQNMF.

Positions 1-72 (MQSIEDIWQE…ANILQEITGR (72 aa)) are domain I, interacts with DnaA modulators. The tract at residues 72-108 (RLFDVRFIDGEQEENFEYTVIKPNPALDEDGVEIGKH) is domain II. Positions 109-325 (MLNPRYVFDT…GALIRVVAYS (217 aa)) are domain III, AAA+ region. ATP is bound by residues Gly-153, Gly-155, Lys-156, and Thr-157. The interval 326 to 451 (SLVNKDITAG…KNLRKAQNMF (126 aa)) is domain IV, binds dsDNA.

Belongs to the DnaA family. As to quaternary structure, oligomerizes as a right-handed, spiral filament on DNA at oriC.

The protein resides in the cytoplasm. Its function is as follows. Plays an essential role in the initiation and regulation of chromosomal replication. ATP-DnaA binds to the origin of replication (oriC) to initiate formation of the DNA replication initiation complex once per cell cycle. Binds the DnaA box (a 9 base pair repeat at the origin) and separates the double-stranded (ds)DNA. Forms a right-handed helical filament on oriC DNA; dsDNA binds to the exterior of the filament while single-stranded (ss)DNA is stabiized in the filament's interior. The ATP-DnaA-oriC complex binds and stabilizes one strand of the AT-rich DNA unwinding element (DUE), permitting loading of DNA polymerase. After initiation quickly degrades to an ADP-DnaA complex that is not apt for DNA replication. Binds acidic phospholipids. This Listeria monocytogenes serotype 4b (strain CLIP80459) protein is Chromosomal replication initiator protein DnaA.